Consider the following 477-residue polypeptide: Glycogen synthase (477 aa).

An ADP-alpha-D-glucose-binding site is contributed by lysine 15.

It belongs to the glycosyltransferase 1 family. Bacterial/plant glycogen synthase subfamily.

It carries out the reaction [(1-&gt;4)-alpha-D-glucosyl](n) + ADP-alpha-D-glucose = [(1-&gt;4)-alpha-D-glucosyl](n+1) + ADP + H(+). Its pathway is glycan biosynthesis; glycogen biosynthesis. In terms of biological role, synthesizes alpha-1,4-glucan chains using ADP-glucose. The sequence is that of Glycogen synthase from Streptococcus pneumoniae serotype 19F (strain G54).